Here is a 448-residue protein sequence, read N- to C-terminus: Iroquois-class homeodomain protein irx-3 (448 aa).

Residues 108-170 (DPSRPKNATR…NARRRLKKEN (63 aa)) constitute a DNA-binding region (homeobox; TALE-type). The tract at residues 171 to 247 (KMTWAPRSRT…EVSDGFEDLN (77 aa)) is disordered. Acidic residues predominate over residues 195-222 (KHEDEEEIDLENIDTEDIESKEDLDDPD). Over residues 223-237 (TDIHSDSKTDTRSDS) the composition is skewed to basic and acidic residues. Acidic residues predominate over residues 238–247 (EVSDGFEDLN).

It belongs to the TALE/IRO homeobox family. As to expression, primarily expressed in the developing central nervous system (CNS). At gastrula stage, expressed in both the superficial and deep layers of the presumptive neural plate with expression spreading to the prospective hindbrain, spinal cord and midbrain-hindbrain junction as neurulation proceeds. Not expressed in the anterior neural plate and CNS expression in the tadpole excludes the forebrain. Outside of the CNS, expressed around the closing blastopore at early gastrula stages and as gastrulation proceeds, expression switches to the anterior lateral plate mesoderm. In tadpoles, expressed in the ectodermal layer of the branchial arches, and in the otic vesicle. Also expressed in specific and overlapping dynamic patterns with irx1 and irx2 during pronephric kidney development. Renal expression begins before segment-specific terminal differentiation in the pronephric anlage at mid-neurula stage, and is later found in proximal tubule PT3 as well as intermediate tubule segments IT1 and IT2, with expression in the kidney being maintained through to the tadpole stage.

The protein localises to the nucleus. Functionally, acts partially redundantly with other irx members in neural patterning. Required for formation of the posterior forebrain, midbrain, hindbrain, and to a lesser extent, spinal cord. Both up-regulates and down-regulates gene expression during neural development. Acts early in neural plate development to induce proneural gene expression and specify a neural precursor state. Also up-regulates repressors that prevent neuronal differentiation. Required during at least two stages of pronephros kidney development; during neurula stages, maintains transcription of key renal genes to define the size and identity of the pronephric anlage, probably in part through regulation of bmp-signaling. Subsequently required for proper formation of the intermediate tubule segment of the pronephros. The polypeptide is Iroquois-class homeodomain protein irx-3 (irx3) (Xenopus laevis (African clawed frog)).